The sequence spans 278 residues: HTH-type transcriptional activator RhaS (278 aa).

Residues 174-272 enclose the HTH araC/xylS-type domain; it reads NLLLAWLEDH…NWSPRDIRQG (99 aa). 2 consecutive DNA-binding regions (H-T-H motif) follow at residues 191-212 and 239-262; these read DAVA…KQQT and VTDI…RREF.

As to quaternary structure, binds DNA as a dimer.

The protein localises to the cytoplasm. Activates expression of the rhaBAD and rhaT operons. This Escherichia coli O6:H1 (strain CFT073 / ATCC 700928 / UPEC) protein is HTH-type transcriptional activator RhaS.